The chain runs to 146 residues: Large ribosomal subunit protein uL15 (146 aa).

Positions 1–54 (MKLHELKPAAGSRKAPKRVGRGTGSGLGRNAGKGEKGQNARSGGGVRPGFEGGQ) are disordered. Composition is skewed to gly residues over residues 21 to 31 (RGTGSGLGRNA) and 42 to 52 (SGGGVRPGFEG).

Belongs to the universal ribosomal protein uL15 family. Part of the 50S ribosomal subunit.

Its function is as follows. Binds to the 23S rRNA. In Clostridium acetobutylicum (strain ATCC 824 / DSM 792 / JCM 1419 / IAM 19013 / LMG 5710 / NBRC 13948 / NRRL B-527 / VKM B-1787 / 2291 / W), this protein is Large ribosomal subunit protein uL15.